The following is a 292-amino-acid chain: Glycine--tRNA ligase alpha subunit (292 aa).

The protein belongs to the class-II aminoacyl-tRNA synthetase family. As to quaternary structure, tetramer of two alpha and two beta subunits.

Its subcellular location is the cytoplasm. It catalyses the reaction tRNA(Gly) + glycine + ATP = glycyl-tRNA(Gly) + AMP + diphosphate. This Syntrophus aciditrophicus (strain SB) protein is Glycine--tRNA ligase alpha subunit.